Here is a 465-residue protein sequence, read N- to C-terminus: Midnolin (465 aa).

The Ubiquitin-like domain maps to methionine 32–glycine 106. 2 disordered regions span residues serine 185–proline 262 and arginine 400–phenylalanine 445. Low complexity-rich tracts occupy residues arginine 195 to valine 219 and serine 240 to proline 257. Residues glutamine 397–serine 424 form a required for nucleolar localization region.

In terms of assembly, interacts with GCK; the interaction occurs preferentially at low glucose levels. Interacts with the proteasome. As to expression, expressed at high levels in brain and liver with significantly lower levels in muscle.

It is found in the nucleus. The protein resides in the cytoplasm. It localises to the cytosol. Its subcellular location is the nucleolus. Functionally, facilitates the ubiquitin-independent proteasomal degradation of stimulus-induced transcription factors such as FOSB, EGR1, NR4A1, and IRF4 to the proteasome for degradation. Promotes also the degradation of other substrates such as CBX4. Plays a role in inhibiting the activity of glucokinase GCK and both glucose-induced and basal insulin secretion. This is Midnolin (Midn) from Mus musculus (Mouse).